Here is a 337-residue protein sequence, read N- to C-terminus: Annexin E1 (337 aa).

Annexin repeat units follow at residues 10-80 (TGVT…MLYK), 81-154 (PRAQ…AVAT), 161-238 (DTHE…LAHD), and 242-312 (DPCC…LLWE).

This sequence belongs to the annexin family.

It localises to the cell projection. It is found in the cilium. The protein resides in the flagellum. Its function is as follows. May function as a calcium-regulated structural element linking phospholipid bilayer and underlying axoneme. The protein is Annexin E1 (ANXE1) of Giardia intestinalis (Giardia lamblia).